Consider the following 178-residue polypeptide: Large ribosomal subunit protein bL17 (178 aa).

Over residues 126 to 139 (DRARRVAASKKAEE) the composition is skewed to basic and acidic residues. Residues 126–178 (DRARRVAASKKAEEQAPAAEAEEQAPAAEAEAPAADAAAEAKADEAAEDKKDA) are disordered. The segment covering 140–163 (QAPAAEAEEQAPAAEAEAPAADAA) has biased composition (low complexity). A compositionally biased stretch (basic and acidic residues) spans 164–178 (AEAKADEAAEDKKDA).

Belongs to the bacterial ribosomal protein bL17 family. As to quaternary structure, part of the 50S ribosomal subunit. Contacts protein L32.

In Nocardia farcinica (strain IFM 10152), this protein is Large ribosomal subunit protein bL17.